Reading from the N-terminus, the 333-residue chain is Acetyltransferase Pat (333 aa).

Residues 85–88 (GEIA), 95–96 (RT), and R135 contribute to the 3',5'-cyclic AMP site. An N-acetyltransferase domain is found at 153–317 (FYLRPVLPGD…DTVPFEPELI (165 aa)). A Mg(2+)-binding site is contributed by E211. Residues 237–239 (FTV), 245–250 (GRGIGS), N276, and R285 contribute to the substrate site.

Homodimer. Mg(2+) serves as cofactor.

With respect to regulation, allosterically regulated by cAMP. Its function is as follows. Catalyzes specifically the acetylation of the epsilon-amino group of a highly conserved lysine residue in acetyl-CoA synthetase (ACS) and of the universal stress protein (USP) MSMEG_4207. Acetylation results in the inactivation of ACS activity and could be important for mycobacteria to adjust to environmental changes. The chain is Acetyltransferase Pat from Mycolicibacterium smegmatis (strain ATCC 700084 / mc(2)155) (Mycobacterium smegmatis).